The chain runs to 474 residues: Salutaridinol 7-O-acetyltransferase (474 aa).

Catalysis depends on H163, which acts as the Proton acceptor. The interval 213-234 (ERLTSPSGMSEIPFSSTPEDTE) is disordered. Residues 214 to 230 (RLTSPSGMSEIPFSSTP) show a composition bias toward polar residues. D416 acts as the Proton acceptor in catalysis.

This sequence belongs to the plant acyltransferase family. As to expression, expressed in root, stem, leaf and capsule of the mature plant. Restricted to sieve elements of the phloem adjacent or proximal to laticifers.

The catalysed reaction is (7S)-salutaridinol + acetyl-CoA = (7S)-O-acetylsalutaridinol + CoA. Its pathway is alkaloid biosynthesis; morphine biosynthesis. Its function is as follows. Acetyltransferase involved in biosynthesis of morphinan-type benzylisoquinoline and opiate alkaloids natural products. Catalyzes the conversion of the phenanthrene alkaloid salutaridinol to salutaridinol-7-O-acetate, the immediate precursor of thebaine along the morphine biosynthetic pathway. Conversion of 7-O-acetylsalutaridinol into thebaine is spontaneous. This is Salutaridinol 7-O-acetyltransferase from Papaver somniferum (Opium poppy).